Consider the following 152-residue polypeptide: uncharacterized protein (152 aa).

The chain crosses the membrane as a helical span at residues 7–27 (TLSVIVFLISLIIIFGIYFSS).

Its subcellular location is the membrane. This is an uncharacterized protein from Methanocaldococcus jannaschii (strain ATCC 43067 / DSM 2661 / JAL-1 / JCM 10045 / NBRC 100440) (Methanococcus jannaschii).